The primary structure comprises 354 residues: Arginase-2, mitochondrial (354 aa).

A mitochondrion-targeting transit peptide spans M1–S22. Residues H120, D143, H145, and D147 each contribute to the Mn(2+) site. Residues H145–N149, S156–N158, and E202 contribute to the substrate site. Mn(2+) is bound by residues D251 and D253. Substrate-binding residues include T265 and E296.

Belongs to the arginase family. In terms of assembly, homotrimer. The cofactor is Mn(2+).

It localises to the mitochondrion. It catalyses the reaction L-arginine + H2O = urea + L-ornithine. It functions in the pathway nitrogen metabolism; urea cycle; L-ornithine and urea from L-arginine: step 1/1. Functionally, may play a role in the regulation of extra-urea cycle arginine metabolism and also in down-regulation of nitric oxide synthesis. Extrahepatic arginase functions to regulate L-arginine bioavailability to nitric oxid synthase (NOS). Arginine metabolism is a critical regulator of innate and adaptive immune responses. Seems to be involved in negative regulation of the survival capacity of activated CD4(+) and CD8(+) T cells. May suppress inflammation-related signaling in asthmatic airway epithelium. May contribute to the immune evasion of H.pylori by restricting M1 macrophage activation and polyamine metabolism. May play a role in promoting prenatal immune suppression. Regulates RPS6KB1 signaling, which promotes endothelial cell senescence and inflammation and implicates NOS3/eNOS dysfunction. Can inhibit endothelial autophagy independently of its enzymatic activity implicating mTORC2 signaling. Involved in vascular smooth muscle cell senescence and apoptosis independently of its enzymatic activity. This chain is Arginase-2, mitochondrial (Arg2), found in Mus musculus (Mouse).